Reading from the N-terminus, the 639-residue chain is DNA mismatch repair protein MutL (639 aa).

A disordered region spans residues 336-392 (SAHDDPTPAISGAARDEEPRGVENRASAGENRFNRPASSPVASAPRPAHVAAPRMPA). A compositionally biased stretch (basic and acidic residues) spans 349-358 (ARDEEPRGVE). Low complexity predominate over residues 370–392 (RPASSPVASAPRPAHVAAPRMPA).

This sequence belongs to the DNA mismatch repair MutL/HexB family.

This protein is involved in the repair of mismatches in DNA. It is required for dam-dependent methyl-directed DNA mismatch repair. May act as a 'molecular matchmaker', a protein that promotes the formation of a stable complex between two or more DNA-binding proteins in an ATP-dependent manner without itself being part of a final effector complex. This chain is DNA mismatch repair protein MutL, found in Edwardsiella ictaluri (strain 93-146).